The chain runs to 112 residues: uncharacterized protein (112 aa).

This is an uncharacterized protein from Acanthamoeba polyphaga mimivirus (APMV).